A 296-amino-acid chain; its full sequence is ADP-dependent (S)-NAD(P)H-hydrate dehydratase (296 aa).

The 275-residue stretch at 18-292 folds into the YjeF C-terminal domain; that stretch reads TALRFPHVFK…PAARWLRNRI (275 aa). Residues Ala-53, Gly-113, and His-165 each contribute to the (6S)-NADPHX site. Residues 202–206 and Gly-231 contribute to the AMP site; that span reads KGHKT. Residue Asp-232 participates in (6S)-NADPHX binding.

The protein belongs to the NnrD/CARKD family. As to quaternary structure, homotetramer. The cofactor is Mg(2+).

The catalysed reaction is (6S)-NADHX + ADP = AMP + phosphate + NADH + H(+). The enzyme catalyses (6S)-NADPHX + ADP = AMP + phosphate + NADPH + H(+). Catalyzes the dehydration of the S-form of NAD(P)HX at the expense of ADP, which is converted to AMP. Together with NAD(P)HX epimerase, which catalyzes the epimerization of the S- and R-forms, the enzyme allows the repair of both epimers of NAD(P)HX, a damaged form of NAD(P)H that is a result of enzymatic or heat-dependent hydration. The polypeptide is ADP-dependent (S)-NAD(P)H-hydrate dehydratase (Neisseria meningitidis serogroup B (strain ATCC BAA-335 / MC58)).